The following is a 57-amino-acid chain: UPF0391 membrane protein Patl_0263 (57 aa).

Helical transmembrane passes span 8 to 28 (FFVL…GVAA) and 30 to 50 (IAKV…VLAF).

It belongs to the UPF0391 family.

The protein resides in the cell membrane. The sequence is that of UPF0391 membrane protein Patl_0263 from Pseudoalteromonas atlantica (strain T6c / ATCC BAA-1087).